Here is a 930-residue protein sequence, read N- to C-terminus: SCY1-like protein 2 (930 aa).

Residues 32–327 (FDVGRHIASG…ADQMTKIPFF (296 aa)) form the Protein kinase domain. Residues 443 to 479 (DEIKNSVLPMVYRALEAPSIQIQELCLNIIPTFANLI) form an HEAT repeat. 2 positions are modified to phosphoserine: S658 and S677. The tract at residues 658–706 (SGSESENREDGMQGKQKRGSLTLEEKQKLAKEQEQAQKLKSQQPLKPQV) is disordered. Basic and acidic residues predominate over residues 680 to 694 (LEEKQKLAKEQEQAQ). Over residues 695 to 705 (KLKSQQPLKPQ) the composition is skewed to low complexity. T708 is modified (phosphothreonine). Residues 895 to 930 (GMQGNPFFNPQNFAQPPPTTMTSSSSASNDLKDLFG) form a disordered region. Low complexity predominate over residues 897 to 922 (QGNPFFNPQNFAQPPPTTMTSSSSAS).

Belongs to the protein kinase superfamily. In terms of assembly, interacts with clathrin and AP2B1; the interaction mediates the association with the AP-2 complex. Post-translationally, could autophosphorylate in presence of poly-L-lysine. In terms of tissue distribution, ubiquitously expressed.

It localises to the cytoplasmic vesicle. The protein resides in the clathrin-coated vesicle. The protein localises to the golgi apparatus. It is found in the trans-Golgi network membrane. Its subcellular location is the endosome membrane. Its function is as follows. Component of the AP2-containing clathrin coat that may regulate clathrin-dependent trafficking at plasma membrane, TGN and endosomal system. A possible serine/threonine-protein kinase toward the beta2-subunit of the plasma membrane adapter complex AP2 and other proteins in presence of poly-L-lysine has not been confirmed. By regulating the expression of excitatory receptors at synapses, plays an essential role in neuronal function and signaling and in brain development. The chain is SCY1-like protein 2 from Mus musculus (Mouse).